A 92-amino-acid chain; its full sequence is Small ribosomal subunit protein uS19 (92 aa).

Belongs to the universal ribosomal protein uS19 family.

In terms of biological role, protein S19 forms a complex with S13 that binds strongly to the 16S ribosomal RNA. The protein is Small ribosomal subunit protein uS19 of Corynebacterium aurimucosum (strain ATCC 700975 / DSM 44827 / CIP 107346 / CN-1) (Corynebacterium nigricans).